The chain runs to 94 residues: Co-chaperonin GroES (94 aa).

Belongs to the GroES chaperonin family. In terms of assembly, heptamer of 7 subunits arranged in a ring. Interacts with the chaperonin GroEL.

It localises to the cytoplasm. In terms of biological role, together with the chaperonin GroEL, plays an essential role in assisting protein folding. The GroEL-GroES system forms a nano-cage that allows encapsulation of the non-native substrate proteins and provides a physical environment optimized to promote and accelerate protein folding. GroES binds to the apical surface of the GroEL ring, thereby capping the opening of the GroEL channel. This Parageobacillus thermoglucosidasius (Geobacillus thermoglucosidasius) protein is Co-chaperonin GroES.